The primary structure comprises 364 residues: MKVLFAGGGTGGHLYPGVAMAAELKKRVPGISISFAGTSAGIEATEVPRLGYRLVLFPVRGLKRGLSIRALVENALILGDFAKSLSMAMALVRKEQPDVVVGTGGYVSAPLLLAAQLSGKKTLIQEQNAFPGVTTRLLARMATEVHLSFEESRKFFGGKSEVFVTGNPAREFPAESRESCLDFFGLDRSLPTLLVFGGSRGARAINNAVLKLCHRLEGTVNLIWQTGALDADRMRGEIGTSATRWIGPYIQEMGKAYGAADLVLCRAGASSLAELTNLGKPSVLIPYPYAAADHQRHNAMALVSAGASVMIDDSKIGEEASFDVILTLLRDREKLAQMGEAARREGHPGAAATLAERIIALSKS.

Residues 10-12 (TGG), asparagine 128, arginine 170, serine 199, isoleucine 250, and glutamine 295 each bind UDP-N-acetyl-alpha-D-glucosamine.

This sequence belongs to the glycosyltransferase 28 family. MurG subfamily.

The protein resides in the cell inner membrane. The enzyme catalyses di-trans,octa-cis-undecaprenyl diphospho-N-acetyl-alpha-D-muramoyl-L-alanyl-D-glutamyl-meso-2,6-diaminopimeloyl-D-alanyl-D-alanine + UDP-N-acetyl-alpha-D-glucosamine = di-trans,octa-cis-undecaprenyl diphospho-[N-acetyl-alpha-D-glucosaminyl-(1-&gt;4)]-N-acetyl-alpha-D-muramoyl-L-alanyl-D-glutamyl-meso-2,6-diaminopimeloyl-D-alanyl-D-alanine + UDP + H(+). The protein operates within cell wall biogenesis; peptidoglycan biosynthesis. In terms of biological role, cell wall formation. Catalyzes the transfer of a GlcNAc subunit on undecaprenyl-pyrophosphoryl-MurNAc-pentapeptide (lipid intermediate I) to form undecaprenyl-pyrophosphoryl-MurNAc-(pentapeptide)GlcNAc (lipid intermediate II). The protein is UDP-N-acetylglucosamine--N-acetylmuramyl-(pentapeptide) pyrophosphoryl-undecaprenol N-acetylglucosamine transferase of Chlorobaculum tepidum (strain ATCC 49652 / DSM 12025 / NBRC 103806 / TLS) (Chlorobium tepidum).